The primary structure comprises 261 residues: tRNA pseudouridine synthase A (261 aa).

Catalysis depends on D51, which acts as the Nucleophile. Position 109 (Y109) interacts with substrate.

Belongs to the tRNA pseudouridine synthase TruA family. As to quaternary structure, homodimer.

It catalyses the reaction uridine(38/39/40) in tRNA = pseudouridine(38/39/40) in tRNA. In terms of biological role, formation of pseudouridine at positions 38, 39 and 40 in the anticodon stem and loop of transfer RNAs. The chain is tRNA pseudouridine synthase A from Shewanella baltica (strain OS195).